The chain runs to 491 residues: Mitochondrial MYO2 receptor-related protein 1 (491 aa).

Threonine 12 is modified (phosphothreonine). Phosphoserine occurs at positions 16 and 37. A coiled-coil region spans residues 295-384; that stretch reads NAEEANSREK…CKKVLKKLTE (90 aa). The interval 300–439 is interaction with MYO2; that stretch reads NSREKSNLDI…GTSSEEDHLT (140 aa). Residues 419–491 form a disordered region; that stretch reads KKIEEQPDSS…LPVQVEKKEK (73 aa). Residues 461–472 show a composition bias toward polar residues; the sequence is SAISTTASVQSG.

In terms of assembly, interacts with MYO2 and PCL7. Post-translationally, phosphorylated by the cyclin-CDK PCL7-PHO85.

Its subcellular location is the bud tip. The protein resides in the bud neck. It is found in the mitochondrion outer membrane. Its function is as follows. Involved in the guiding of mitochondrial tubules to the bud tip during cell division. The polypeptide is Mitochondrial MYO2 receptor-related protein 1 (MMR1) (Saccharomyces cerevisiae (strain ATCC 204508 / S288c) (Baker's yeast)).